Here is a 128-residue protein sequence, read N- to C-terminus: Flagellar assembly factor FliW (128 aa).

It belongs to the FliW family. In terms of assembly, interacts with translational regulator CsrA and flagellin(s).

It localises to the cytoplasm. Its function is as follows. Acts as an anti-CsrA protein, binds CsrA and prevents it from repressing translation of its target genes, one of which is flagellin. Binds to flagellin and participates in the assembly of the flagellum. In Campylobacter fetus subsp. fetus (strain 82-40), this protein is Flagellar assembly factor FliW.